Reading from the N-terminus, the 292-residue chain is 4-hydroxy-tetrahydrodipicolinate synthase (292 aa).

Residue threonine 45 coordinates pyruvate. The active-site Proton donor/acceptor is tyrosine 133. The active-site Schiff-base intermediate with substrate is the lysine 161. Position 203 (isoleucine 203) interacts with pyruvate.

The protein belongs to the DapA family. Homotetramer; dimer of dimers.

The protein localises to the cytoplasm. It carries out the reaction L-aspartate 4-semialdehyde + pyruvate = (2S,4S)-4-hydroxy-2,3,4,5-tetrahydrodipicolinate + H2O + H(+). The protein operates within amino-acid biosynthesis; L-lysine biosynthesis via DAP pathway; (S)-tetrahydrodipicolinate from L-aspartate: step 3/4. Its function is as follows. Catalyzes the condensation of (S)-aspartate-beta-semialdehyde [(S)-ASA] and pyruvate to 4-hydroxy-tetrahydrodipicolinate (HTPA). This chain is 4-hydroxy-tetrahydrodipicolinate synthase, found in Vibrio cholerae serotype O1 (strain M66-2).